The primary structure comprises 607 residues: MCGIIGIIGNDEVAPRLVDALKRLEYRGYDSAGIATLQNGRLDRRRAEGKLVNLEKRLAGEPLPGVIGIGHTRWATHGRPVERNAHPHITTRLAVVHNGIIENFAELRAMLEAEGRKFETETDTEAVAHLVTRELEKGKSPVEAVRDCLPHLKGAFALAFLFEGDEELLIGARQGPPLAVGYGEGEMFLGSDAIALAPFTDTISYLEDGDWAVLTRNGVSIYDENNKPVERPVQKSQNTNMLVSKGNHRHFMQKEMFEQPEVISHTLANYLDFTTGKVRKEAIGIDFSKVDRLTITACGTAYYAATVAKYWFEQIARLPVDSDIASEFRYREMPLSKDSLAMFVSQSGETADTLASLRYCKAQGLKIASVVNVTGSTIARESDAVFPTLAGPEIGVASTKAFTCQLSAMASLAIAAARARGAIDEVREQELVHQLSEAPRFINQVLKLEDQIAAVCHDLSKVNHVLYLGRGTSFPLAMEGALKLKEISYIHAEGYAAGELKHGPIALIDETMPVIVIAPSDRLYEKTVSNMQEVAARGGRIILITDKKGAESASIDTMATIVLPEVPEFISPLVYALPIQMLAYHTAVLMGTDVDQPRNLAKSVTVE.

The Nucleophile; for GATase activity role is filled by cysteine 2. One can recognise a Glutamine amidotransferase type-2 domain in the interval 2–217 (CGIIGIIGND…DGDWAVLTRN (216 aa)). SIS domains are found at residues 283–422 (IGID…ARGA) and 455–597 (VCHD…VDQP). The active-site For Fru-6P isomerization activity is lysine 602.

As to quaternary structure, homodimer.

Its subcellular location is the cytoplasm. It catalyses the reaction D-fructose 6-phosphate + L-glutamine = D-glucosamine 6-phosphate + L-glutamate. Functionally, catalyzes the first step in hexosamine metabolism, converting fructose-6P into glucosamine-6P using glutamine as a nitrogen source. The protein is Glutamine--fructose-6-phosphate aminotransferase [isomerizing] of Brucella suis biovar 1 (strain 1330).